A 200-amino-acid chain; its full sequence is Ras-related protein RHN1 (200 aa).

Residues 17–25 (GDMGAGKSS), 36–42 (LEFQEST), 65–69 (DTAGQ), 123–126 (NKAD), and 153–155 (SAK) contribute to the GTP site. The Effector region signature appears at 39–47 (QESTIGAAF). Residues Cys-198 and Cys-199 are each lipidated (S-geranylgeranyl cysteine).

Belongs to the small GTPase superfamily. Rab family. High in stem, root, and inflorescence.

It localises to the cell membrane. Functionally, protein transport. Probably involved in vesicular traffic. In Nicotiana plumbaginifolia (Leadwort-leaved tobacco), this protein is Ras-related protein RHN1 (RHN1).